Here is a 1216-residue protein sequence, read N- to C-terminus: ATP-dependent helicase/nuclease subunit A (1216 aa).

A UvrD-like helicase ATP-binding domain is found at glutamine 26 to serine 488. Residue alanine 47–threonine 54 participates in ATP binding. The region spanning lysine 515–glycine 802 is the UvrD-like helicase C-terminal domain.

This sequence belongs to the helicase family. AddA subfamily. As to quaternary structure, heterodimer of AddA and AddB/RexB. It depends on Mg(2+) as a cofactor.

The catalysed reaction is Couples ATP hydrolysis with the unwinding of duplex DNA by translocating in the 3'-5' direction.. It carries out the reaction ATP + H2O = ADP + phosphate + H(+). The heterodimer acts as both an ATP-dependent DNA helicase and an ATP-dependent, dual-direction single-stranded exonuclease. Recognizes the chi site generating a DNA molecule suitable for the initiation of homologous recombination. The AddA nuclease domain is required for chi fragment generation; this subunit has the helicase and 3' -&gt; 5' nuclease activities. The sequence is that of ATP-dependent helicase/nuclease subunit A from Streptococcus pneumoniae (strain ATCC 700669 / Spain 23F-1).